We begin with the raw amino-acid sequence, 284 residues long: Homeobox-leucine zipper protein HAT4 (284 aa).

Polar residues predominate over residues 48–59 (ESFTSSVPNSDS). Residues 48–132 (ESFTSSVPNS…DGDNSRKKLR (85 aa)) are disordered. The span at 89-100 (VSSPNSTVSSST) shows a compositional bias: low complexity. A DNA-binding region (homeobox) is located at residues 126–185 (NSRKKLRLSKDQSAILEETFKDHSTLNPKQKQALAKQLGLRARQVEVWFQNRRARTKLKQ). The interval 193–214 (LRRCCENLTEENRRLQKEVTEL) is leucine-zipper.

The protein belongs to the HD-ZIP homeobox family. Class II subfamily. As to quaternary structure, interacts with DNA as homodimer. Predominantly expressed in leaves and stems.

The protein localises to the nucleus. Functionally, probable transcription factor involved in the negative regulation of cell elongation and specific cell proliferation processes such as lateral root formation and secondary growth of the vascular system. Acts as a mediator of the red/far-red light effects on leaf cell expansion in the shading response. Binds to the DNA sequence 5'-CAAT[GC]ATTG-3'. Negatively regulates its own expression. This is Homeobox-leucine zipper protein HAT4 (HAT4) from Arabidopsis thaliana (Mouse-ear cress).